A 316-amino-acid polypeptide reads, in one-letter code: Ribosomal RNA small subunit methyltransferase H (316 aa).

S-adenosyl-L-methionine-binding positions include 35-37 (GGH), Asp55, Phe79, Asp101, and Gln108.

Belongs to the methyltransferase superfamily. RsmH family.

It is found in the cytoplasm. It catalyses the reaction cytidine(1402) in 16S rRNA + S-adenosyl-L-methionine = N(4)-methylcytidine(1402) in 16S rRNA + S-adenosyl-L-homocysteine + H(+). Its function is as follows. Specifically methylates the N4 position of cytidine in position 1402 (C1402) of 16S rRNA. This is Ribosomal RNA small subunit methyltransferase H from Vibrio parahaemolyticus serotype O3:K6 (strain RIMD 2210633).